A 518-amino-acid chain; its full sequence is Cytochrome P450 monooxygenase atnE (518 aa).

A helical membrane pass occupies residues 11-31 (FLAAFAVWMGVVVLAFAIFCV). An N-linked (GlcNAc...) asparagine glycan is attached at N184. C458 provides a ligand contact to heme.

It belongs to the cytochrome P450 family. The cofactor is heme.

The protein resides in the membrane. The protein operates within secondary metabolite biosynthesis. In terms of biological role, cytochrome P450 monooxygenase; part of the gene cluster that mediates the biosynthesis of aspercryptins, linear lipopeptides built from six amino acids including 2 highly unusual and nonproteogenic amino acids, 2-amino-octanoic acid (2aoa) and 2-amino-dodecanol (2adol). The core structure of aspercryptins is as follows: Ser/Ala-Thr-Ile/Val-2aoa-Asn-2adol. The first step of aspercryptin biosynthesis is the generation of the fatty acid precursors, octanoic and dodecanoic acids, by the FAS subunits atnF and atnM. The fatty acid precursors are likely transformed into the corresponding alpha-amino fatty acids in three steps. First, they are hydroxylated by the cytochrome P450 monooxygenase atnE, then oxidized to the corresponding alpha-keto acids by the NAD(P)-dependent oxidoreductase atnD, and finally converted to the alpha-amino fatty acids by the PLP-dependent aminotransferases atnH or atnJ. the alpha-amino fatty acids, 2-amino-octanoic and 2-amino-dodecanoic acids, are recognized, activated, and covalently tethered to the NRPS atnA by its fourth and sixth adenylation domains. The second module of atnA is the Thr module and contains an epimerase (E) domain responsible for the epimerization of Thr to D-allo-Thr. Additionally, despite atnA having only one epimerase domain, the first amino acid of aspercryptin A1 is D-Ser, suggesting that serine is either loaded directly as D-Ser on the first module or that the epimerase domain in the threonine module epimerizes both L-Ser and L-Thr. After condensation of the hexapeptide of aspercryptin, the C-terminal reductase (TE) domain might be involved in the reductive release and production of the aldehyde hexapeptide. Further reduction would generate aspercryptins. The variety of aspercryptins produced reflects the flexibility of the atnA NRPS, allowing incorporation of alanine instead of serine, valine for isoleucine, and a C10 fatty amino alcohol instead of the C12 version. AtnB seems to be involved in the selectivity for Ile versus Val by the third module. Moreover, type B, C and D aspercryptins have an additional N-terminal cichorine, acetyl and propionyl group respectively. In Emericella nidulans (strain FGSC A4 / ATCC 38163 / CBS 112.46 / NRRL 194 / M139) (Aspergillus nidulans), this protein is Cytochrome P450 monooxygenase atnE.